The sequence spans 306 residues: Glutaminase (306 aa).

Residues Ser-61, Asn-111, Glu-155, Asn-162, Tyr-186, Tyr-238, and Val-256 each contribute to the substrate site.

It belongs to the glutaminase family. Homotetramer.

The catalysed reaction is L-glutamine + H2O = L-glutamate + NH4(+). This chain is Glutaminase, found in Pseudomonas entomophila (strain L48).